Consider the following 996-residue polypeptide: Cilia- and flagella-associated protein 251 (996 aa).

WD repeat units follow at residues 73-114 (GHCN…PKKT), 118-164 (PHPN…EPCL), 168-211 (EFDR…KGFN), 219-258 (PSLKVLTQTVFIPDNTQVVTGTTDGHIIVWDISLIIEKVD), 282-319 (KGSNSINILKIQDNYLVIGSSNGSIRFYDFQYRIIAWF), 399-438 (SIVSPIIAMSCRPNSNVIGICCENGYLYEWNFQEKSSVLS), 445-485 (TDKE…WQNS), 494-533 (QGKPKVNMQVFSSDSKNLATMDADYAVSLFTIDHRQFDVN), 547-593 (IHHS…YSKQ), 615-658 (EQET…FKFC), and 719-759 (AHPD…LEQI). The disordered stretch occupies residues 971–996 (DLEGEERDDNIEDQYEDEENEEYDQD).

The protein localises to the cell projection. Its subcellular location is the cilium. As component of a spoke-associated complex, regulates ciliary mobility by mediating a stable and functional assembly of the radial spoke 3 (RS3). The sequence is that of Cilia- and flagella-associated protein 251 from Tetrahymena thermophila (strain SB210).